The chain runs to 388 residues: Mannitol-1-phosphate 5-dehydrogenase (388 aa).

An NAD(+)-binding site is contributed by 5–16 (AIQFGGGNIGRG). Lysine 213 is an active-site residue.

This sequence belongs to the mannitol dehydrogenase family. Monomer.

The enzyme catalyses D-mannitol 1-phosphate + NAD(+) = beta-D-fructose 6-phosphate + NADH + H(+). In terms of biological role, catalyzes the NAD(H)-dependent interconversion of D-fructose 6-phosphate and D-mannitol 1-phosphate in the mannitol metabolic pathway. In Neosartorya fischeri (strain ATCC 1020 / DSM 3700 / CBS 544.65 / FGSC A1164 / JCM 1740 / NRRL 181 / WB 181) (Aspergillus fischerianus), this protein is Mannitol-1-phosphate 5-dehydrogenase (mpdA).